The chain runs to 180 residues: Translation initiation factor IF-3 (180 aa).

It belongs to the IF-3 family. Monomer.

The protein localises to the cytoplasm. IF-3 binds to the 30S ribosomal subunit and shifts the equilibrium between 70S ribosomes and their 50S and 30S subunits in favor of the free subunits, thus enhancing the availability of 30S subunits on which protein synthesis initiation begins. This Escherichia coli (strain K12 / MC4100 / BW2952) protein is Translation initiation factor IF-3.